The primary structure comprises 204 residues: Thiamine-phosphate synthase (204 aa).

4-amino-2-methyl-5-(diphosphooxymethyl)pyrimidine-binding positions include 34 to 38 (QYRDK) and D66. Residues D67 and D86 each contribute to the Mg(2+) site. S104 is a binding site for 4-amino-2-methyl-5-(diphosphooxymethyl)pyrimidine. 131 to 133 (TST) provides a ligand contact to 2-[(2R,5Z)-2-carboxy-4-methylthiazol-5(2H)-ylidene]ethyl phosphate. K134 serves as a coordination point for 4-amino-2-methyl-5-(diphosphooxymethyl)pyrimidine. 2-[(2R,5Z)-2-carboxy-4-methylthiazol-5(2H)-ylidene]ethyl phosphate is bound by residues G160 and 180–181 (VS).

This sequence belongs to the thiamine-phosphate synthase family. Mg(2+) is required as a cofactor.

The enzyme catalyses 2-[(2R,5Z)-2-carboxy-4-methylthiazol-5(2H)-ylidene]ethyl phosphate + 4-amino-2-methyl-5-(diphosphooxymethyl)pyrimidine + 2 H(+) = thiamine phosphate + CO2 + diphosphate. The catalysed reaction is 2-(2-carboxy-4-methylthiazol-5-yl)ethyl phosphate + 4-amino-2-methyl-5-(diphosphooxymethyl)pyrimidine + 2 H(+) = thiamine phosphate + CO2 + diphosphate. It catalyses the reaction 4-methyl-5-(2-phosphooxyethyl)-thiazole + 4-amino-2-methyl-5-(diphosphooxymethyl)pyrimidine + H(+) = thiamine phosphate + diphosphate. The protein operates within cofactor biosynthesis; thiamine diphosphate biosynthesis; thiamine phosphate from 4-amino-2-methyl-5-diphosphomethylpyrimidine and 4-methyl-5-(2-phosphoethyl)-thiazole: step 1/1. In terms of biological role, condenses 4-methyl-5-(beta-hydroxyethyl)thiazole monophosphate (THZ-P) and 2-methyl-4-amino-5-hydroxymethyl pyrimidine pyrophosphate (HMP-PP) to form thiamine monophosphate (TMP). This is Thiamine-phosphate synthase from Picrophilus torridus (strain ATCC 700027 / DSM 9790 / JCM 10055 / NBRC 100828 / KAW 2/3).